The chain runs to 483 residues: Acetyl-coenzyme A carboxylase carboxyl transferase subunit beta, chloroplastic (483 aa).

The CoA carboxyltransferase N-terminal domain maps to 221-483 (LWVQCENCYG…FQFHGFFPRP (263 aa)). Cys-225, Cys-228, Cys-244, and Cys-247 together coordinate Zn(2+). The segment at 225 to 247 (CENCYGLNYKKFFSSKMNICEQC) adopts a C4-type zinc-finger fold.

This sequence belongs to the AccD/PCCB family. As to quaternary structure, acetyl-CoA carboxylase is a heterohexamer composed of biotin carboxyl carrier protein, biotin carboxylase and 2 subunits each of ACCase subunit alpha and ACCase plastid-coded subunit beta (accD). Zn(2+) serves as cofactor.

It is found in the plastid. The protein localises to the chloroplast stroma. The catalysed reaction is N(6)-carboxybiotinyl-L-lysyl-[protein] + acetyl-CoA = N(6)-biotinyl-L-lysyl-[protein] + malonyl-CoA. It participates in lipid metabolism; malonyl-CoA biosynthesis; malonyl-CoA from acetyl-CoA: step 1/1. Functionally, component of the acetyl coenzyme A carboxylase (ACC) complex. Biotin carboxylase (BC) catalyzes the carboxylation of biotin on its carrier protein (BCCP) and then the CO(2) group is transferred by the transcarboxylase to acetyl-CoA to form malonyl-CoA. This is Acetyl-coenzyme A carboxylase carboxyl transferase subunit beta, chloroplastic from Nuphar advena (Common spatterdock).